The chain runs to 470 residues: Chitin deacetylase 1 (470 aa).

Residues 1–19 form the signal peptide; that stretch reads MFTFAAFSALLISLAGVVA. N-linked (GlcNAc...) asparagine glycans are attached at residues N101 and N121. A disulfide bridge links C155 with C363. Residues 159–358 enclose the NodB homology domain; it reads NVWGLSYDDG…VLANGTYQLK (200 aa). D166 functions as the Proton acceptor in the catalytic mechanism. D166 serves as a coordination point for acetate. 3 residues coordinate Co(2+): D167, H216, and H220. Y257 contacts acetate. H331 functions as the Proton donor in the catalytic mechanism. N-linked (GlcNAc...) asparagine glycans are attached at residues N352, N378, and N440. A disordered region spans residues 406 to 447; sequence EVSAPSEATGSTAAGSAASTTSGSGASASTGAASNTSSSGSG. Low complexity predominate over residues 408–447; that stretch reads SAPSEATGSTAAGSAASTTSGSGASASTGAASNTSSSGSG. S444 carries GPI-anchor amidated serine lipidation. Residues 445–470 constitute a propeptide, removed in mature form; that stretch reads GSGRSATMGGALIALAAVAVGMVYVA.

Belongs to the polysaccharide deacetylase family. The cofactor is Co(2+).

Its subcellular location is the secreted. It is found in the cell wall. It localises to the cell membrane. It catalyses the reaction [(1-&gt;4)-N-acetyl-beta-D-glucosaminyl](n) + n H2O = chitosan + n acetate. Its function is as follows. Hydrolyzes the N-acetamido groups of N-acetyl-D-glucosamine residues in chitin to form chitosan and acetate. Chitosan is required to anchor melanin to the cell wall, for maintenance of cell wall integrity, and for proper cytokinesis. Plays a major role in synthesizing cell wall chitosan during host infection; chitosan offers an advantage during infection as it is less readily detected than chitin by host immunosurveillance mechanisms. This is Chitin deacetylase 1 from Cryptococcus neoformans var. grubii serotype A (strain H99 / ATCC 208821 / CBS 10515 / FGSC 9487) (Filobasidiella neoformans var. grubii).